We begin with the raw amino-acid sequence, 130 residues long: MAAEQYYGTGRRKTATARVFISVGTGKVTINDRPLDEYFGREVARMIVCQPLEATDNVEKFDIKATVKGGGSFGQAGAIRHGLTRALMAYDEAMRSTLRAAGYVTRDAREVERKKVGLRKARKKPQFSKR.

It belongs to the universal ribosomal protein uS9 family.

This Teredinibacter turnerae (strain ATCC 39867 / T7901) protein is Small ribosomal subunit protein uS9.